Reading from the N-terminus, the 215-residue chain is Pyridoxine/pyridoxamine 5'-phosphate oxidase (215 aa).

Residues 11–14 (RRDY) and Lys-69 contribute to the substrate site. FMN is bound by residues 64-69 (RVVLLK), 79-80 (YT), Lys-86, and Gln-108. The substrate site is built by Tyr-126, Arg-130, and Ser-134. FMN contacts are provided by residues 143-144 (QS) and Trp-188. 194–196 (RLH) lines the substrate pocket. Arg-198 is a binding site for FMN.

This sequence belongs to the pyridoxamine 5'-phosphate oxidase family. As to quaternary structure, homodimer. The cofactor is FMN.

The catalysed reaction is pyridoxamine 5'-phosphate + O2 + H2O = pyridoxal 5'-phosphate + H2O2 + NH4(+). It catalyses the reaction pyridoxine 5'-phosphate + O2 = pyridoxal 5'-phosphate + H2O2. It participates in cofactor metabolism; pyridoxal 5'-phosphate salvage; pyridoxal 5'-phosphate from pyridoxamine 5'-phosphate: step 1/1. It functions in the pathway cofactor metabolism; pyridoxal 5'-phosphate salvage; pyridoxal 5'-phosphate from pyridoxine 5'-phosphate: step 1/1. Functionally, catalyzes the oxidation of either pyridoxine 5'-phosphate (PNP) or pyridoxamine 5'-phosphate (PMP) into pyridoxal 5'-phosphate (PLP). The chain is Pyridoxine/pyridoxamine 5'-phosphate oxidase from Legionella pneumophila (strain Lens).